The sequence spans 172 residues: Small ribosomal subunit protein uS5 (172 aa).

One can recognise an S5 DRBM domain in the interval 17 to 80; sequence MREKMIAVNR…EEARRKMIKV (64 aa).

Belongs to the universal ribosomal protein uS5 family. As to quaternary structure, part of the 30S ribosomal subunit. Contacts proteins S4 and S8.

Its function is as follows. With S4 and S12 plays an important role in translational accuracy. In terms of biological role, located at the back of the 30S subunit body where it stabilizes the conformation of the head with respect to the body. The polypeptide is Small ribosomal subunit protein uS5 (Janthinobacterium sp. (strain Marseille) (Minibacterium massiliensis)).